A 341-amino-acid polypeptide reads, in one-letter code: N-acetyl-gamma-glutamyl-phosphate reductase (341 aa).

Cys145 is an active-site residue.

The protein belongs to the NAGSA dehydrogenase family. Type 1 subfamily.

Its subcellular location is the cytoplasm. It catalyses the reaction N-acetyl-L-glutamate 5-semialdehyde + phosphate + NADP(+) = N-acetyl-L-glutamyl 5-phosphate + NADPH + H(+). It participates in amino-acid biosynthesis; L-arginine biosynthesis; N(2)-acetyl-L-ornithine from L-glutamate: step 3/4. In terms of biological role, catalyzes the NADPH-dependent reduction of N-acetyl-5-glutamyl phosphate to yield N-acetyl-L-glutamate 5-semialdehyde. The polypeptide is N-acetyl-gamma-glutamyl-phosphate reductase (Methanothrix thermoacetophila (strain DSM 6194 / JCM 14653 / NBRC 101360 / PT) (Methanosaeta thermophila)).